We begin with the raw amino-acid sequence, 257 residues long: Imidazole glycerol phosphate synthase subunit HisF (257 aa).

Residues D11 and D130 contribute to the active site.

This sequence belongs to the HisA/HisF family. Heterodimer of HisH and HisF.

Its subcellular location is the cytoplasm. It carries out the reaction 5-[(5-phospho-1-deoxy-D-ribulos-1-ylimino)methylamino]-1-(5-phospho-beta-D-ribosyl)imidazole-4-carboxamide + L-glutamine = D-erythro-1-(imidazol-4-yl)glycerol 3-phosphate + 5-amino-1-(5-phospho-beta-D-ribosyl)imidazole-4-carboxamide + L-glutamate + H(+). Its pathway is amino-acid biosynthesis; L-histidine biosynthesis; L-histidine from 5-phospho-alpha-D-ribose 1-diphosphate: step 5/9. In terms of biological role, IGPS catalyzes the conversion of PRFAR and glutamine to IGP, AICAR and glutamate. The HisF subunit catalyzes the cyclization activity that produces IGP and AICAR from PRFAR using the ammonia provided by the HisH subunit. The protein is Imidazole glycerol phosphate synthase subunit HisF of Shewanella woodyi (strain ATCC 51908 / MS32).